Consider the following 216-residue polypeptide: Transmembrane emp24 domain-containing protein eca (216 aa).

The signal sequence occupies residues 1-20 (MRDQILSLALLLCVLHSACG). Residues 21–182 (LYFHISETER…FRHTSESTNS (162 aa)) lie on the Lumenal side of the membrane. Residues 30-126 (RKCFIEEVPD…QLRVHLDIQV (97 aa)) enclose the GOLD domain. Residues 134 to 164 (ANVAQKEKLTELQLRIRQLLDQVEQITKEQN) are a coiled coil. Residues 183–203 (RVLWWSLAQTVVLVCMGFWQM) traverse the membrane as a helical segment. The Cytoplasmic portion of the chain corresponds to 204–216 (RHLKSFFEAKKLV). The Prevents secretion from ER signature appears at 213-216 (KKLV).

It belongs to the EMP24/GP25L family.

It is found in the endoplasmic reticulum membrane. Functionally, eca and bai are essential, though not redundant, for dorsoventral patterning of the embryo. Specifically required during early embryogenesis for the activity of maternal tkv, while the zygotic tkv is not affected. Involved in Golgi organization. This is Transmembrane emp24 domain-containing protein eca from Drosophila ananassae (Fruit fly).